Consider the following 290-residue polypeptide: 33 kDa chaperonin (290 aa).

2 disulfide bridges follow: Cys-235–Cys-237 and Cys-268–Cys-271.

The protein belongs to the HSP33 family. Under oxidizing conditions two disulfide bonds are formed involving the reactive cysteines. Under reducing conditions zinc is bound to the reactive cysteines and the protein is inactive.

It localises to the cytoplasm. In terms of biological role, redox regulated molecular chaperone. Protects both thermally unfolding and oxidatively damaged proteins from irreversible aggregation. Plays an important role in the bacterial defense system toward oxidative stress. This chain is 33 kDa chaperonin, found in Streptococcus mutans serotype c (strain ATCC 700610 / UA159).